The chain runs to 440 residues: Heat stress transcription factor A-4b (440 aa).

Positions 121 to 181 (NERKDYEEEI…QRSLISYVRE (61 aa)) form a coiled coil. The tract at residues 133–183 (LKSDNAALSSELQNNTLKKLNMEKRMQALEEKLFVVEDQQRSLISYVREIV) is hydrophobic repeat HR-A/B. The short motif at 158–163 (MQALEE) is the Nuclear export signal element. The Nuclear localization signal signature appears at 200 to 204 (RKKRR). The segment at 264-417 (DISYDDGVPG…EMKSGDRQHL (154 aa)) is disordered. A compositionally biased stretch (polar residues) spans 295 to 305 (SPPTRMRTSSA). The span at 333 to 343 (SRVDTRAKVSE) shows a compositional bias: basic and acidic residues. The AHA motif lies at 375-384 (DGFWQQFLTE). The segment covering 380 to 390 (QFLTEQPGSSD) has biased composition (polar residues). Basic and acidic residues predominate over residues 391–417 (AHQEAQSERRDGGNKVDEMKSGDRQHL).

It belongs to the HSF family. Class A subfamily. Homotrimer. Post-translationally, exhibits temperature-dependent phosphorylation.

The protein localises to the cytoplasm. Its subcellular location is the nucleus. Its function is as follows. Transcriptional regulator that specifically binds DNA of heat shock promoter elements (HSE). This Oryza sativa subsp. japonica (Rice) protein is Heat stress transcription factor A-4b (HSFA4B).